Consider the following 529-residue polypeptide: Intraflagellar transport protein 56 (529 aa).

The tract at residues M1–A21 is disordered. The span at E11–A21 shows a compositional bias: basic and acidic residues. TPR repeat units follow at residues G57–P90, S154–C187, A189–S221, S285–L321, V359–S392, and P428–T461.

Belongs to the IFT56 family.

Its subcellular location is the cell projection. It localises to the cilium. The protein localises to the flagellum. The protein resides in the cytoplasm. It is found in the cytoskeleton. Its subcellular location is the flagellum axoneme. It localises to the flagellum basal body. Component of the intraflagellar transport complex B (IFT-B) involved in flagellar assembly. The protein is Intraflagellar transport protein 56 of Giardia intestinalis (strain ATCC 50803 / WB clone C6) (Giardia lamblia).